Reading from the N-terminus, the 458-residue chain is MSLWDAIVIGAGPAGIGASGLLAENGAKVLVIDEAPGPGGQIWRGVEDVSDARARILGSDYLAGRDEVRRLRASGAELSFETQAWRVEPEGTVWLKDSHGIRRERGRRLLIATGAMERPCPLDGWTLPGVTTVGGLQILLKREGMLPGGPLVLIGTGPLFYLFAAQCLAAGMRDLSLIDTAAAGAIVSALRHVPAALTGKGPSYLIKGLKLLWMLRRAGVDIYNHSGDLRIKSAADGLEVHFRMREVEHRLSASHVGLHEGVIPETHLPRALGCRMHWSEAGGAFHPHRDIHLQSSVAGVYIAGDAGGIGGATVALLEGRLAAMGILASLGRPIDELLLRATRRDRAAHLAARPLLDHLYQPSPAILTPADGVLACRCEEVTCGEIRAALRAGCAGPNQVKAFLRCGMGPCQGRMCGMTLTSLAASTHDISMGDAGFLTIRPPLRPISLGEVADLVEP.

To T-protein and to dimethylglycine dehydrogenase. In terms of assembly, heterodimer of a subunit A and a subunit B.

It participates in opine metabolism; octopine degradation. In terms of biological role, oxidative cleavage of octopine into L-arginine and pyruvate. The sequence is that of Opine oxidase subunit A (ooxA) from Rhizobium meliloti (strain 1021) (Ensifer meliloti).